The primary structure comprises 468 residues: Chromatin assembly factor 1 subunit B (468 aa).

5 WD repeats span residues 11-52 (HDSQ…NGQN), 69-108 (HHEQ…TQQE), 143-182 (TAAA…LVCG), 185-224 (DHGH…AGVV), and 371-413 (IHYS…SRIE).

Belongs to the WD repeat HIR1 family. In terms of assembly, component of chromatin assembly factor 1 (CAF-1), composed of MSI1/p50, CAC2/p60 and CAC1/p90. Interacts with RTT106.

Its subcellular location is the nucleus. In terms of biological role, acts as a component of the histone chaperone complex chromatin assembly factor 1 (CAF-1), which assembles histone octamers onto replicating DNA. It performs the first step of the nucleosome assembly process, bringing newly synthesized histones H3 and H4 to replicating DNA; histones H2A/H2B can bind to this chromatin precursor subsequent to DNA replication to complete the histone octamer. Plays a role in the maintenance of heterochromatin. The polypeptide is Chromatin assembly factor 1 subunit B (CAC2) (Saccharomyces cerevisiae (strain ATCC 204508 / S288c) (Baker's yeast)).